The following is a 568-amino-acid chain: Envelope glycoprotein E (568 aa).

A signal peptide spans 1–20 (MMPATLAGLALAVTVATMFA). Residues 21 to 422 (QRVDSTTIHH…GGGPGNSKRR (402 aa)) lie on the Virion surface side of the membrane. N-linked (GlcNAc...) asparagine; by host glycosylation is found at Asn88, Asn179, and Asn248. Cysteines 271 and 280 form a disulfide. Residues 423 to 443 (AAVLGAAVWIALTLLILGGLG) form a helical membrane-spanning segment. Residues 444 to 568 (AYVAVNKKCL…ANKTFPSQRY (125 aa)) lie on the Intravirion side of the membrane. Residues 465 to 468 (KPTL) carry the Internalization motif motif. The disordered stretch occupies residues 470–534 (THAHTYTSLP…SRRNSFGPTL (65 aa)). The acidic stretch occupies residues 482-497 (GDLSLEQDAEDEDEDE). A compositionally biased stretch (acidic residues) spans 486–500 (LEQDAEDEDEDEEEL). The segment covering 515-526 (KSSRSPSRRSSR) has biased composition (basic residues).

The protein belongs to the alphaherpesvirinae glycoprotein E family. In terms of assembly, interacts with gI. In terms of processing, phosphorylated on serines within the acidic cluster. Phosphorylation determines whether endocytosed viral gE traffics to the trans-Golgi network or recycles to the cell membrane.

The protein localises to the virion membrane. The protein resides in the host cell membrane. Its subcellular location is the host cell junction. It is found in the host Golgi apparatus membrane. It localises to the host endosome membrane. In terms of biological role, in epithelial cells, the heterodimer gE/gI is required for the cell-to-cell spread of the virus, by sorting nascent virions to cell junctions. Once the virus reaches the cell junctions, virus particles can spread to adjacent cells extremely rapidly through interactions with cellular receptors that accumulate at these junctions. Implicated in basolateral spread in polarized cells. In neuronal cells, gE/gI is essential for the anterograde spread of the infection throughout the host nervous system. Together with US9, the heterodimer gE/gI is involved in the sorting and transport of viral structural components toward axon tips. In Psittacid herpesvirus 1 (isolate Amazon parrot/-/97-0001/1997) (PsHV-1), this protein is Envelope glycoprotein E (US8).